Consider the following 278-residue polypeptide: 4-deoxy-L-threo-5-hexosulose-uronate ketol-isomerase (278 aa).

Positions 196, 198, 203, and 245 each coordinate Zn(2+).

It belongs to the KduI family. It depends on Zn(2+) as a cofactor.

The catalysed reaction is 5-dehydro-4-deoxy-D-glucuronate = 3-deoxy-D-glycero-2,5-hexodiulosonate. Its pathway is glycan metabolism; pectin degradation; 2-dehydro-3-deoxy-D-gluconate from pectin: step 4/5. Catalyzes the isomerization of 5-dehydro-4-deoxy-D-glucuronate to 3-deoxy-D-glycero-2,5-hexodiulosonate. This Salmonella typhimurium (strain LT2 / SGSC1412 / ATCC 700720) protein is 4-deoxy-L-threo-5-hexosulose-uronate ketol-isomerase.